We begin with the raw amino-acid sequence, 444 residues long: Lycopaoctaene synthase (444 aa).

The NADP(+) site is built by Arg48 and Arg73. Mg(2+)-binding residues include Asp76, Glu79, and Asp80. The NADP(+) site is built by Arg215, Lys315, and Arg317. The next 2 membrane-spanning stretches (helical) occupy residues 391–411 (TAMV…AYVY) and 415–435 (GTSL…IGLF).

It belongs to the phytoene/squalene synthase family. Mg(2+) serves as cofactor.

It is found in the membrane. The enzyme catalyses 2 (2E,6E)-farnesyl diphosphate + NADH + H(+) = squalene + 2 diphosphate + NAD(+). It catalyses the reaction 2 (2E,6E)-farnesyl diphosphate + NADPH + H(+) = squalene + 2 diphosphate + NADP(+). It carries out the reaction 2 (2E,6E,10E)-geranylgeranyl diphosphate + NADPH + H(+) = all-trans-lycopaoctaene + 2 diphosphate + NADP(+). Functionally, converts the C20 geranylgeranyl diphosphate (GGPP) to the C40 lycopaoctaene, the first committed intermediate in the production of lycopadiene. Converts farnesyl diphosphate (FPP) into squalene, a precursor for sterol biosynthesis in eukaryotes. Converts with low efficiency the C20 phytyl diphosphate (PPP) to the C40 lycopadiene in vitro. This reaction may not have biological significance in vivo. This chain is Lycopaoctaene synthase, found in Botryococcus braunii (Green alga).